The following is a 209-amino-acid chain: A-type ATP synthase subunit D (209 aa).

This sequence belongs to the V-ATPase D subunit family. Has multiple subunits with at least A(3), B(3), C, D, E, F, H, I and proteolipid K(x).

Its subcellular location is the cell membrane. Component of the A-type ATP synthase that produces ATP from ADP in the presence of a proton gradient across the membrane. In Methanoregula boonei (strain DSM 21154 / JCM 14090 / 6A8), this protein is A-type ATP synthase subunit D.